A 92-amino-acid polypeptide reads, in one-letter code: Cell wall protein CWP2 (92 aa).

The first 20 residues, 1–20, serve as a signal peptide directing secretion; the sequence is MQFSTVASVAFVALANFVAA. Residues 24-37 form a PIR1/2/3 repeat; the sequence is AAISQITDGQIQAT. The segment at 41 to 60 is disordered; the sequence is TTEATTTAAPSSTVETVSPS. The GPI-anchor amidated asparagine moiety is linked to residue asparagine 71. Positions 72–92 are cleaved as a propeptide — removed in mature form; that stretch reads GAAKAAVGMGAGALAAAAMLL.

This sequence belongs to the SRP1/TIP1 family. Extensively O-glycosylated. In terms of processing, the GPI-anchor is attached to the protein in the endoplasmic reticulum and serves to target the protein to the cell surface. There, the glucosamine-inositol phospholipid moiety is cleaved off and the GPI-modified mannoprotein is covalently attached via its lipidless GPI glycan remnant to the 1,6-beta-glucan of the outer cell wall layer. Post-translationally, covalently linked to beta-1,3-glucan of the inner cell wall layer via an alkali-sensitive ester linkage between the gamma-carboxyl group of glutamic acids, arising from a specific glutamine within the PIR1/2/3 repeat, and hydroxyl groups of glucoses of beta-1,3-glucan chains.

It is found in the secreted. It localises to the cell wall. The protein resides in the membrane. Functionally, component of the cell wall. The sequence is that of Cell wall protein CWP2 (CWP2) from Saccharomyces cerevisiae (strain ATCC 204508 / S288c) (Baker's yeast).